We begin with the raw amino-acid sequence, 850 residues long: Protein translocase subunit SecA (850 aa).

Residues glutamine 87, 105–109, and aspartate 494 each bind ATP; that span reads GEGKT. Positions 834, 836, 845, and 846 each coordinate Zn(2+).

Belongs to the SecA family. Monomer and homodimer. Part of the essential Sec protein translocation apparatus which comprises SecA, SecYEG and auxiliary proteins SecDF-YajC and YidC. Zn(2+) serves as cofactor.

Its subcellular location is the cell inner membrane. The protein resides in the cytoplasm. It carries out the reaction ATP + H2O + cellular proteinSide 1 = ADP + phosphate + cellular proteinSide 2.. Functionally, part of the Sec protein translocase complex. Interacts with the SecYEG preprotein conducting channel. Has a central role in coupling the hydrolysis of ATP to the transfer of proteins into and across the cell membrane, serving as an ATP-driven molecular motor driving the stepwise translocation of polypeptide chains across the membrane. The chain is Protein translocase subunit SecA from Desulfotalea psychrophila (strain LSv54 / DSM 12343).